Consider the following 205-residue polypeptide: Guanylate kinase (205 aa).

The Guanylate kinase-like domain occupies glycine 3–leucine 181. Residue alanine 10 to threonine 17 coordinates ATP.

Belongs to the guanylate kinase family.

The protein localises to the cytoplasm. The catalysed reaction is GMP + ATP = GDP + ADP. Functionally, essential for recycling GMP and indirectly, cGMP. This is Guanylate kinase from Hydrogenovibrio crunogenus (strain DSM 25203 / XCL-2) (Thiomicrospira crunogena).